We begin with the raw amino-acid sequence, 388 residues long: Pregnancy-associated glycoprotein (388 aa).

The N-terminal stretch at 1 to 15 (MKWFGVLGLVTLSEC) is a signal peptide. Residues 74-385 (YMGIISVGTP…DRENDRIGLA (312 aa)) enclose the Peptidase A1 domain. Asp-92 is an active-site residue. 2 cysteine pairs are disulfide-bonded: Cys-105–Cys-110 and Cys-266–Cys-270. Asp-275 is a catalytic residue. Cys-309 and Cys-344 are joined by a disulfide. Residue Asn-356 is glycosylated (N-linked (GlcNAc...) asparagine).

It belongs to the peptidase A1 family. As to expression, trophoblast and placental tissue.

Its subcellular location is the secreted. It is found in the extracellular space. The protein is Pregnancy-associated glycoprotein (PAG) of Equus caballus (Horse).